The chain runs to 263 residues: 3-methyl-2-oxobutanoate hydroxymethyltransferase (263 aa).

Mg(2+)-binding residues include aspartate 46 and aspartate 85. 3-methyl-2-oxobutanoate is bound by residues 46–47 (DS), aspartate 85, and lysine 115. Glutamate 117 provides a ligand contact to Mg(2+). The active-site Proton acceptor is glutamate 180.

This sequence belongs to the PanB family. As to quaternary structure, homodecamer; pentamer of dimers. Requires Mg(2+) as cofactor.

The protein resides in the cytoplasm. It carries out the reaction 3-methyl-2-oxobutanoate + (6R)-5,10-methylene-5,6,7,8-tetrahydrofolate + H2O = 2-dehydropantoate + (6S)-5,6,7,8-tetrahydrofolate. It functions in the pathway cofactor biosynthesis; (R)-pantothenate biosynthesis; (R)-pantoate from 3-methyl-2-oxobutanoate: step 1/2. Catalyzes the reversible reaction in which hydroxymethyl group from 5,10-methylenetetrahydrofolate is transferred onto alpha-ketoisovalerate to form ketopantoate. The sequence is that of 3-methyl-2-oxobutanoate hydroxymethyltransferase from Corynebacterium diphtheriae (strain ATCC 700971 / NCTC 13129 / Biotype gravis).